The chain runs to 212 residues: Orotate phosphoribosyltransferase (212 aa).

Residues arginine 97, lysine 101, histidine 103, and 123 to 131 contribute to the 5-phospho-alpha-D-ribose 1-diphosphate site; that span reads EDLISTGGS. Serine 127 contacts orotate.

It belongs to the purine/pyrimidine phosphoribosyltransferase family. PyrE subfamily. In terms of assembly, homodimer. Requires Mg(2+) as cofactor.

It carries out the reaction orotidine 5'-phosphate + diphosphate = orotate + 5-phospho-alpha-D-ribose 1-diphosphate. The protein operates within pyrimidine metabolism; UMP biosynthesis via de novo pathway; UMP from orotate: step 1/2. Its function is as follows. Catalyzes the transfer of a ribosyl phosphate group from 5-phosphoribose 1-diphosphate to orotate, leading to the formation of orotidine monophosphate (OMP). The protein is Orotate phosphoribosyltransferase of Bacteroides thetaiotaomicron (strain ATCC 29148 / DSM 2079 / JCM 5827 / CCUG 10774 / NCTC 10582 / VPI-5482 / E50).